Here is an 815-residue protein sequence, read N- to C-terminus: Cell division control protein 53 (815 aa).

Residues 9-280 (DDLEATWNFI…WDDHTKKPLS (272 aa)) form a required for interaction with SKP1/CBF3D and F-box protein region. The interval 448 to 748 (KKATKPEVAS…IEKELNTERQ (301 aa)) is required for interaction with CDC34/UBC3. In terms of domain architecture, Cullin neddylation spans 746-807 (ERQIFLEACI…QKGYLQRGDD (62 aa)). A Glycyl lysine isopeptide (Lys-Gly) (interchain with G-Cter in NEDD8) cross-link involves residue Lys-760.

The protein belongs to the cullin family. In terms of assembly, component of multiple SCF (SKP1-CUL1-F-box) E3 ubiquitin-protein ligase complexes formed of CUL1, SKP1/HRT1, RBX1 and a variable F-box domain-containing protein as substrate-specific adapter. Component of the SCF(CDC4) complex containing CDC4. Component of the SCF(MET30) complex containing MET30. Component of the SCF(GRR1) complex containing GRR1. Component of the probable SCF(DIA2) complex containing DIA2. Component of the probable SCF(YDR131C) complex containing YDR131C. Component of the probable SCF(YDR306C) complex containing YDR306C. Component of the probable SCF(YLR224W) complex containing YLR224W. Component of the probable SCF(YJL149W) complex containing YJL149W. Component of the probable SCF(YNL311C) complex containing YNL311C. Component of the probable SCF(MDM30) complex containing MDM30. Component of the probable SCF(UFO1) complex containing UFO1. Component of the probable SCF(HRT3) complex containing HRT3. Component of the probable SCF(YBR280C) complex containing YBR280C. Component of the probable SCF(YBR352W) complex containing YBR352W. Interacts with DCN1, YBR280C, YLR224W and YLR352W. The unneddylated form interacts with LAG2/CAND1 and the interaction mediates the exchange of the F-box substrate-specific subunit. Post-translationally, neddylated; enhancing the ubiquitin-ligase activity.

The protein resides in the cytoplasm. It is found in the nucleus. Its function is as follows. Core component of multiple cullin-RING-based SCF (SKP1-CUL1-F-box) E3 ubiquitin-protein ligase complexes which mediate the ubiquitination and subsequent proteasomal degradation of target proteins. As a scaffold protein may contribute to catalysis through positioning of the substrate and the ubiquitin-conjugating enzyme. The SCF complex associates with CDC34 as the E2 ubiquitin-conjugating enzyme. The functional specificity of the SCF complex depends on the type of F-box protein. SCF(CDC4) controls the G1-to-S phase transition; it directs ubiquitination of the phosphorylated CDK inhibitor SIC1 and of CDC6. SCF(CDC4) directs ubiquitination of GCN4. SCF(GRR1) directs ubiquitination of phosphorylated CLN1, CLN2 and GIC2. SCF(MET30) directs ubiquitination of MET4. SCF(DIA2) is specifically involved in the pheromone induced degradation of phosphorylated TEC1. SCF(MDM30) seems to direct ubiquitination of FZ01. Involved in the regulation of methionine biosynthesis genes. This Saccharomyces cerevisiae (strain ATCC 204508 / S288c) (Baker's yeast) protein is Cell division control protein 53 (CDC53).